Reading from the N-terminus, the 387-residue chain is Probable aminomethyltransferase, mitochondrial (387 aa).

E219, R248, and Y385 together coordinate substrate.

It belongs to the GcvT family. The glycine cleavage system is composed of four proteins: P, T, L and H.

It localises to the mitochondrion. It carries out the reaction N(6)-[(R)-S(8)-aminomethyldihydrolipoyl]-L-lysyl-[protein] + (6S)-5,6,7,8-tetrahydrofolate = N(6)-[(R)-dihydrolipoyl]-L-lysyl-[protein] + (6R)-5,10-methylene-5,6,7,8-tetrahydrofolate + NH4(+). The glycine cleavage system catalyzes the degradation of glycine. In Schizosaccharomyces pombe (strain 972 / ATCC 24843) (Fission yeast), this protein is Probable aminomethyltransferase, mitochondrial (gcv1).